Reading from the N-terminus, the 232-residue chain is Putative N-acetylmannosamine-6-phosphate 2-epimerase (232 aa).

It belongs to the NanE family.

The enzyme catalyses an N-acyl-D-glucosamine 6-phosphate = an N-acyl-D-mannosamine 6-phosphate. It functions in the pathway amino-sugar metabolism; N-acetylneuraminate degradation; D-fructose 6-phosphate from N-acetylneuraminate: step 3/5. In terms of biological role, converts N-acetylmannosamine-6-phosphate (ManNAc-6-P) to N-acetylglucosamine-6-phosphate (GlcNAc-6-P). In Borrelia garinii subsp. bavariensis (strain ATCC BAA-2496 / DSM 23469 / PBi) (Borreliella bavariensis), this protein is Putative N-acetylmannosamine-6-phosphate 2-epimerase.